A 290-amino-acid polypeptide reads, in one-letter code: uncharacterized protein (290 aa).

This is an uncharacterized protein from Lepidoptera (butterflies and moths).